A 949-amino-acid chain; its full sequence is MTDSKYFTTTKKGEIFELKAELNSDKKEKKKEAVKKVIASMTVGKDVSALFPDVVNCMQTDNLELKKLVYLYLMNYAKSQPDMAIMAVNTFVKDCEDPNPLIRALAVRTMGCIRVDKITEYLCEPLRKCLKDEDPYVRKTAAVCVAKLHDINAQLVEDQGFLDTLKDLISDSNPMVVANAVAALSEIAESHPSSNLLDLNPQSINKLLTALNECTEWGQIFILDCLANYMPKDDREAQSICERVTPRLSHANSAVVLSAVKVLMKFMEMLSKDLDYYGTLLKKLAPPLVTLLSAEPELQYVALRNINLIVQKRPEILKHEMKVFFVKYNDPIYVKLEKLDIMIRLASQANIAQVLAELKEYATEVDVDFVRKAVRAIGRCAIKVEQSAERCVSTLLDLIQTKVNYVVQEAIVVIKDIFRKYPNKYESVIATLCENLDSLDEPEARAAMIWIVGEYAERIDNADELLESFLEGFHDESTQVQLQLLTAIVKLFLKKPTETQELVQQVLSLATQDSDNPDLRDRGYIYWRLLSTDPVAAKEVVLAEKPLISEETDLIEPTLLDELICYIGTLASVYHKPPSAFVEGGRGVVHKSLPPRTASSESAESPETAPTGAPPGEQPDVIPAQGDLLGDLLNLDLGPPVSGPPLATSSVQMGAVDLLGGGLDSLMGDEPEGIGGTNFVAPPTAAVPANLGAPIGSGLSDLFDLTSGVGTLSGSYVAPKAVWLPAMKAKGLEISGTFTRQVGSISMDLQLTNKALQVMTDFAIQFNRNSFGLAPAAPLQVHAPLSPNQTVEISLPLSTVGSVMKMEPLNNLQVAVKNNIDVFYFSTLYPLHILFVEDGKMDRQMFLATWKDIPNENEAQFQIRDCPLNAEAASSKLQSSNIFTVAKRNVEGQDMLYQSLKLTNGIWVLAELRIQPGNPSCTDLELSLKCRAPEVSQHVYQAYETILKN.

Lys-318 is subject to N6-acetyllysine. Tyr-574 carries the post-translational modification 3'-nitrotyrosine. Residues 584 to 625 (GGRGVVHKSLPPRTASSESAESPETAPTGAPPGEQPDVIPAQ) form a disordered region. Residues 594 to 611 (PPRTASSESAESPETAPT) are compositionally biased toward low complexity.

This sequence belongs to the adaptor complexes large subunit family. As to quaternary structure, adaptor protein complex 1 (AP-1) is a heterotetramer composed of two large adaptins (gamma-type subunit AP1G1 and beta-type subunit AP1B1), a medium adaptin (mu-type subunit AP1M1 or AP1M2) and a small adaptin (sigma-type subunit AP1S1 or AP1S2 or AP1S3). Widely expressed.

It is found in the golgi apparatus. The protein resides in the cytoplasmic vesicle. It localises to the clathrin-coated vesicle membrane. Its function is as follows. Subunit of clathrin-associated adaptor protein complex 1 that plays a role in protein sorting in the late-Golgi/trans-Golgi network (TGN) and/or endosomes. The AP complexes mediate both the recruitment of clathrin to membranes and the recognition of sorting signals within the cytosolic tails of transmembrane cargo molecules. This Homo sapiens (Human) protein is AP-1 complex subunit beta-1 (AP1B1).